The primary structure comprises 179 residues: Large ribosomal subunit protein uL5 (179 aa).

Belongs to the universal ribosomal protein uL5 family. As to quaternary structure, part of the 50S ribosomal subunit; part of the 5S rRNA/L5/L18/L25 subcomplex. Contacts the 5S rRNA and the P site tRNA. Forms a bridge to the 30S subunit in the 70S ribosome.

In terms of biological role, this is one of the proteins that bind and probably mediate the attachment of the 5S RNA into the large ribosomal subunit, where it forms part of the central protuberance. In the 70S ribosome it contacts protein S13 of the 30S subunit (bridge B1b), connecting the 2 subunits; this bridge is implicated in subunit movement. Contacts the P site tRNA; the 5S rRNA and some of its associated proteins might help stabilize positioning of ribosome-bound tRNAs. The protein is Large ribosomal subunit protein uL5 of Pectobacterium atrosepticum (strain SCRI 1043 / ATCC BAA-672) (Erwinia carotovora subsp. atroseptica).